The sequence spans 122 residues: Prefoldin subunit 1 (122 aa).

Position 2 is an N-acetylalanine (A2).

Belongs to the prefoldin subunit beta family. Heterohexamer of two PFD-alpha type and four PFD-beta type subunits.

In terms of biological role, binds specifically to cytosolic chaperonin (c-CPN) and transfers target proteins to it. Binds to nascent polypeptide chain and promotes folding in an environment in which there are many competing pathways for nonnative proteins. This is Prefoldin subunit 1 (Pfdn1) from Mus musculus (Mouse).